Reading from the N-terminus, the 200-residue chain is Snake venom serine protease VaSP1 (200 aa).

Positions 1 to 200 (VIGGDECNIN…EIQGIVSYGK (200 aa)) constitute a Peptidase S1 domain. Catalysis depends on charge relay system residues aspartate 88 and serine 182.

As to quaternary structure, monomer. N-glycosylated. The protein exist in multiple isoforms. In terms of tissue distribution, expressed by the venom gland.

It is found in the secreted. With respect to regulation, inhibited by Pefabloc (90% inhibition), DTT (90%), Zn(2+) (80%), trypsin inhibitor II (50%), and benzamidine (45%), but not inhibited by EDTA, Ca(2+), Mg(2+) and L-Cys. Its function is as follows. Snake venom serine protease active on several blood coagulation enzymes. It completely cleaves fibrinogen Aalpha chain (FGA) after 120 minutes, partially cleaves Bbeta chain (FGB) (overnight) and has no activity on gamma chain. It does not release fibrinopeptides A and/or B exclusively, since the enzyme does not provoke fibrin polymerisation. It also degrades fibrin as efficiently as plasmin, and exhibits potent ability to cleave plasminogen and prothrombin, as well as heavy chain of factor X (F10). In vitro, it cleaves insulin B-chain (at positions His38-Leu39, Ala40-Leu41 and Tyr16-Leu17). The polypeptide is Snake venom serine protease VaSP1 (Vipera ammodytes ammodytes (Western sand viper)).